The following is a 292-amino-acid chain: Ribosomal protein L11 methyltransferase (292 aa).

The S-adenosyl-L-methionine site is built by Thr-144, Gly-165, Asp-187, and Asn-229.

This sequence belongs to the methyltransferase superfamily. PrmA family.

Its subcellular location is the cytoplasm. The catalysed reaction is L-lysyl-[protein] + 3 S-adenosyl-L-methionine = N(6),N(6),N(6)-trimethyl-L-lysyl-[protein] + 3 S-adenosyl-L-homocysteine + 3 H(+). Functionally, methylates ribosomal protein L11. The polypeptide is Ribosomal protein L11 methyltransferase (Pseudomonas putida (strain ATCC 47054 / DSM 6125 / CFBP 8728 / NCIMB 11950 / KT2440)).